Here is a 353-residue protein sequence, read N- to C-terminus: MHVADFSFNLPKNLIARYPLPERSTCRLLSLDGHSGAIKHNVFTDILDQLSLGDLLVFNNTRVIPARLFGRKISGGKVEVLVERVLDNQRVLAHIRASKTPKIDTLLLLGDNENIRAIIVARHQIWFELLFDDQRDILTILNDAGHIPLPYYLDRPDYSLDRELYQTVYSQHPGAIAAPTAGLHFDQQLLSALRVKGVEMVFITLHVGTGTFQPIKVKKIEHHHMYSEYTEVPHTVVDAVIACKSRGNRVVAVGTTSVRSLESAIVSVSNSKHTMLAPFCGETSIFIYPGYRFRVIDALITNFHLPQSTPIMLVSAFAGYQHTFNAYREAVNLAYRFLSYGDAMFITNNNSVF.

Belongs to the QueA family. As to quaternary structure, monomer.

The protein localises to the cytoplasm. It catalyses the reaction 7-aminomethyl-7-carbaguanosine(34) in tRNA + S-adenosyl-L-methionine = epoxyqueuosine(34) in tRNA + adenine + L-methionine + 2 H(+). The protein operates within tRNA modification; tRNA-queuosine biosynthesis. In terms of biological role, transfers and isomerizes the ribose moiety from AdoMet to the 7-aminomethyl group of 7-deazaguanine (preQ1-tRNA) to give epoxyqueuosine (oQ-tRNA). The protein is S-adenosylmethionine:tRNA ribosyltransferase-isomerase of Baumannia cicadellinicola subsp. Homalodisca coagulata.